The primary structure comprises 376 residues: Sulfate/thiosulfate import ATP-binding protein CysA 1 (376 aa).

In terms of domain architecture, ABC transporter spans 3–237 (IRLTNISKKF…PNSRFVFDFL (235 aa)). 35–42 (GPSGSGKT) is a binding site for ATP.

The protein belongs to the ABC transporter superfamily. Sulfate/tungstate importer (TC 3.A.1.6) family. In terms of assembly, the complex is composed of two ATP-binding proteins (CysA), two transmembrane proteins (CysT and CysW) and a solute-binding protein (CysP).

It localises to the cell inner membrane. It carries out the reaction sulfate(out) + ATP + H2O = sulfate(in) + ADP + phosphate + H(+). The catalysed reaction is thiosulfate(out) + ATP + H2O = thiosulfate(in) + ADP + phosphate + H(+). Its function is as follows. Part of the ABC transporter complex CysAWTP involved in sulfate/thiosulfate import. Responsible for energy coupling to the transport system. In Shewanella oneidensis (strain ATCC 700550 / JCM 31522 / CIP 106686 / LMG 19005 / NCIMB 14063 / MR-1), this protein is Sulfate/thiosulfate import ATP-binding protein CysA 1.